The sequence spans 517 residues: Acetylcholine receptor subunit gamma (517 aa).

The first 22 residues, 1 to 22, serve as a signal peptide directing secretion; that stretch reads MHGGQGPLLLLLLLAVCLGAQG. Residues 23-240 are Extracellular-facing; it reads RNQEERLLAD…VVFYLLIQRK (218 aa). N-linked (GlcNAc...) asparagine glycans are attached at residues N52 and N163. A disulfide bond links C150 and C164. The next 3 membrane-spanning stretches (helical) occupy residues 241-265, 275-293, and 309-330; these read PLFYVINIIAPCVLISSVAILIHFL, TVAINVLLAQTVFLFLVAK, and LTFLLVVTILIVVNAVVVLNVS. The Cytoplasmic segment spans residues 331–474; sequence LRSPHTHSMA…WFLVGRVLDR (144 aa). Residues 475 to 495 traverse the membrane as a helical segment; that stretch reads VCFLAMLSLFICGTAGIFLMA.

It belongs to the ligand-gated ion channel (TC 1.A.9) family. Acetylcholine receptor (TC 1.A.9.1) subfamily. Gamma/CHRNG sub-subfamily. As to quaternary structure, pentamer of two alpha chains, and one each of the beta, delta, and gamma (in immature muscle) or epsilon (in mature muscle) chains.

It is found in the postsynaptic cell membrane. Its subcellular location is the cell membrane. It carries out the reaction K(+)(in) = K(+)(out). The enzyme catalyses Na(+)(in) = Na(+)(out). After binding acetylcholine, the AChR responds by an extensive change in conformation that affects all subunits and leads to opening of an ion-conducting channel across the plasma membrane. This chain is Acetylcholine receptor subunit gamma, found in Homo sapiens (Human).